An 852-amino-acid polypeptide reads, in one-letter code: Nucleolar protein 14 homolog (852 aa).

A disordered region spans residues 1–40; sequence MVAKGKKASADAVYAKKTTRSANPFDNSTAQSSKRGNPFD. The segment covering 20 to 35 has biased composition (polar residues); that stretch reads RSANPFDNSTAQSSKR. The stretch at 190–221 forms a coiled coil; that stretch reads IDEMIVEQKRRKNEIAKEKDEVYDLTEKLDAN. Disordered regions lie at residues 288–324 and 338–410; these read RRMR…GEDD and LGTH…KSAD. Positions 344-353 are enriched in basic and acidic residues; the sequence is GKKEAVLKGD. The segment covering 354–381 has biased composition (acidic residues); the sequence is ENEDDDDKEGEEEEEEDSDEESDSEVDN. A coiled-coil region spans residues 774–851; it reads KMSKAKEERA…ELSRAKKKKK (78 aa).

Belongs to the NOP14 family. In terms of assembly, component of the ribosomal small subunit (SSU) processome.

It is found in the nucleus. It localises to the nucleolus. In terms of biological role, involved in nucleolar processing of pre-18S ribosomal RNA. Has a role in the nuclear export of 40S pre-ribosomal subunit to the cytoplasm. This is Nucleolar protein 14 homolog (l(3)07882) from Drosophila melanogaster (Fruit fly).